A 48-amino-acid polypeptide reads, in one-letter code: Light-harvesting polypeptide B-885 beta-2 chain (48 aa).

Residues 1–20 are Cytoplasmic-facing; that stretch reads AEDRKSLSGLTEQEAQEFGT. The chain crosses the membrane as a helical span at residues 21–43; the sequence is LYTQGVAFVAVIAIVAHALVWAW. His-37 provides a ligand contact to a bacteriochlorophyll. Residues 44 to 48 are Periplasmic-facing; the sequence is RPWLQ.

This sequence belongs to the antenna complex beta subunit family. As to quaternary structure, the core complex is formed by different alpha and beta chains, binding bacteriochlorophyll molecules, and arranged most probably in tetrameric structures disposed around the reaction center. The non-pigmented gamma chains may constitute additional components.

Its subcellular location is the cell inner membrane. In terms of biological role, antenna complexes are light-harvesting systems, which transfer the excitation energy to the reaction centers. The sequence is that of Light-harvesting polypeptide B-885 beta-2 chain from Rhodocyclus tenuis (Rhodospirillum tenue).